The sequence spans 121 residues: Nitrogenase-stabilizing/protective protein NifW (121 aa).

The protein belongs to the NifW family. Homotrimer; associates with NifD.

In terms of biological role, may protect the nitrogenase Fe-Mo protein from oxidative damage. This is Nitrogenase-stabilizing/protective protein NifW from Synechococcus sp. (strain JA-2-3B'a(2-13)) (Cyanobacteria bacterium Yellowstone B-Prime).